The chain runs to 385 residues: Alanine racemase (385 aa).

Catalysis depends on Lys-40, which acts as the Proton acceptor; specific for D-alanine. Lys-40 carries the post-translational modification N6-(pyridoxal phosphate)lysine. A substrate-binding site is contributed by Arg-139. The Proton acceptor; specific for L-alanine role is filled by Tyr-268. Met-315 provides a ligand contact to substrate.

The protein belongs to the alanine racemase family. The cofactor is pyridoxal 5'-phosphate.

It catalyses the reaction L-alanine = D-alanine. It participates in amino-acid biosynthesis; D-alanine biosynthesis; D-alanine from L-alanine: step 1/1. In terms of biological role, catalyzes the interconversion of L-alanine and D-alanine. May also act on other amino acids. This Anoxybacillus flavithermus (strain DSM 21510 / WK1) protein is Alanine racemase (alr).